Here is a 418-residue protein sequence, read N- to C-terminus: Gamma-glutamyl phosphate reductase (418 aa).

This sequence belongs to the gamma-glutamyl phosphate reductase family.

It is found in the cytoplasm. The enzyme catalyses L-glutamate 5-semialdehyde + phosphate + NADP(+) = L-glutamyl 5-phosphate + NADPH + H(+). It participates in amino-acid biosynthesis; L-proline biosynthesis; L-glutamate 5-semialdehyde from L-glutamate: step 2/2. Its function is as follows. Catalyzes the NADPH-dependent reduction of L-glutamate 5-phosphate into L-glutamate 5-semialdehyde and phosphate. The product spontaneously undergoes cyclization to form 1-pyrroline-5-carboxylate. The protein is Gamma-glutamyl phosphate reductase of Desulfosudis oleivorans (strain DSM 6200 / JCM 39069 / Hxd3) (Desulfococcus oleovorans).